Here is a 28-residue protein sequence, read N- to C-terminus: Conotoxin de7b (28 aa).

3 disulfide bridges follow: cysteine 2–cysteine 18, cysteine 9–cysteine 22, and cysteine 17–cysteine 27. Position 4 is a 4-hydroxyproline; partial (proline 4). Glutamate 7 carries the post-translational modification 4-carboxyglutamate; partial. Proline 14 is modified (4-hydroxyproline; partial).

As to expression, expressed by the venom duct.

Its subcellular location is the secreted. In terms of biological role, may inhibit sodium (Nav) or calcium channels (Cav). The chain is Conotoxin de7b from Conasprella delessertii (Sozon's cone).